The primary structure comprises 519 residues: Lysine 5,6-aminomutase alpha subunit (519 aa).

57-59 (DEV) provides a ligand contact to adenosylcob(III)alamin. Pyridoxal 5'-phosphate contacts are provided by residues 187–192 (RTTGQS), S241, Y266, R271, and N302.

This sequence belongs to the KamD family. Heterotetramer of 2 alpha and 2 beta subunits. Requires adenosylcob(III)alamin as cofactor. Pyridoxal 5'-phosphate is required as a cofactor.

It carries out the reaction (3S)-3,6-diaminohexanoate = (3S,5S)-3,5-diaminohexanoate. It catalyses the reaction D-lysine = (2R,5S)-2,5-diaminohexanoate. It functions in the pathway amino-acid metabolism; lysine degradation. Rapidly inactivated in the presence of D-lysine and to a lesser extent in the absence of adenosylcobalamin (Adocbl). Activity is stable in the presence of Adocbl when D-lysine is absent. Adocbl imparts thermal stability at 37 degrees Celsius. Its function is as follows. Catalyzes the migration of the L-beta-lysine and D-lysine epsilon amino group to the delta carbon to produce 3,5-diaminohexanoate and 2,5-diaminohexanoate, respectively. In Acetoanaerobium sticklandii (strain ATCC 12662 / DSM 519 / JCM 1433 / CCUG 9281 / NCIMB 10654 / HF) (Clostridium sticklandii), this protein is Lysine 5,6-aminomutase alpha subunit (kamD).